Here is a 1659-residue protein sequence, read N- to C-terminus: eIF-2-alpha kinase GCN2 (1659 aa).

The RWD domain maps to 17-128; the sequence is NELEAIRSIY…SFTQEKLDEF (112 aa). A disordered region spans residues 149–170; sequence KEQLEKEEREKQQETIKKRSDE. Protein kinase domains are found at residues 256-527 and 599-981; these read LVKP…MKFL and FEEI…SGWL. ATP contacts are provided by residues 605-613 and Lys628; that span reads LGQGAFGQV. 2 disordered regions span residues 671–691 and 727–768; these read NVFE…DFEE and FENS…VPRR. A Phosphoserine modification is found at Ser761. The Proton acceptor role is filled by Asp835. Residues Thr882 and Thr887 each carry the phosphothreonine; by autocatalysis modification. The interval 999–1519 is histidyl-tRNA synthetase-like; sequence NPSSPWQQQV…EFKRWDENSS (521 aa).

Belongs to the protein kinase superfamily. Ser/Thr protein kinase family. GCN2 subfamily. Homodimer; homodimerization is important for kinase activation by uncharged tRNAs. Interacts (via N-terminal RWD domain) with GCN1 (via N- and C-terminus); this interaction stimulates GCN2 kinase activity in a GCN20-dependent manner in response to amino acid starvation. Interacts (via N-terminus) with the GCN1-GCN20 complex on translating ribosomes in amino acid-starved cells; GCN1 may bind near the ribosomal A-site and promotes the transfer of uncharged tRNAs from the A-site to the tRNA-binding domain in GCN2 for its subsequent kinase activation, and hence allowing GCN4 translational activation and derepression of amino acid biosynthetic genes. Interacts (via C-terminus) with TIF11; this interaction is direct, occurs in amino acid-repleted cells, may be stabilized in a ribosome-dependent manner, reduces GCN2-mediated eIF-2-alpha phosphorylation but not GCN2 autophosphorylation and is lost in amino acid-starved cells and by uncharged tRNAs. Associates (via C-terminus) with ribosomes. The cofactor is Mg(2+). In terms of processing, autophosphorylated, autophosphorylation on Thr-882 and Thr-887 increases kinase activity.

The protein localises to the cytoplasm. The catalysed reaction is L-seryl-[protein] + ATP = O-phospho-L-seryl-[protein] + ADP + H(+). It carries out the reaction L-threonyl-[protein] + ATP = O-phospho-L-threonyl-[protein] + ADP + H(+). Its activity is regulated as follows. The integrated stress response (ISR) is activated in response to conditions that promote ribosome collisions: GCN1, which acts as a ribosome collision sensor, activates GCN2. The RQC pathway and the integrated stress response (ISR) antagonize each other: HEL2 prevents the activation of GCN2, while GCN2 suppresses RQC activation. Ribosome stalling-induced integrated stress response prefers ribosomes with empty A sites. The kinase activity is stimulated upon binding to uncharged tRNAs. Its function is as follows. Metabolic-stress sensing protein kinase that phosphorylates the alpha subunit of eukaryotic translation initiation factor 2 (eIF-2-alpha/SUI2) on 'Ser-52' in response to low amino acid, carbon, or purine availability. Required for adapatation to nutrient starvation by acting as a key component of the integrated stress response (ISR), by which cells alter their translational and transcriptional output in response to starvation. Converts phosphorylated eIF-2-alpha/SUI2 either to a competitive inhibitor of translation initiation factor eIF-2B, leading to a global protein synthesis repression, and thus to a reduced overall utilization of amino acids, or to a translational initiation activation of specific mRNAs, such as the transcriptional activator GCN4, and hence allowing GCN4-mediated reprogramming of transcription to alleviate nutrient depletion. Binds uncharged tRNAs. Binds to aminoacylated tRNA(Phe) less tightly than to deacylated tRNA(Phe). Binds to double-stranded RNA. This chain is eIF-2-alpha kinase GCN2, found in Saccharomyces cerevisiae (strain ATCC 204508 / S288c) (Baker's yeast).